A 478-amino-acid chain; its full sequence is MSARVLMVQGCTSDAGKSTLVAALCRWLHRQGIAVAPFKPQNMALNSAVTVDGGEIGRAQALQAQACGLEPQTDFNPVLLKPNSDTGAQVIVHGHPVATLDAVGYHAYKATAFNAVLASHARLVERFDVVLVEGAGSPAEINLRDNDIANMGYAEAVDCAVILVADIDRGGVFAHLVGTLALLSASERARVAGVVINRFRGDLALLQPGLAWLERETGKPVLGVLPYLHGLQLDAEDAVPRNAPQEPQSQLRVVVPVLPRISNHTDVDALLAHPQVDVRLIGPGQTPPPCDLILLPGSKSTRHDLQWLRTHGWDAAIARHLRYGGKLLGICGGLQMLGTHLHDPRGIEGAAGSSPGLGWLSLQTTLQPHKQLHRVHGRLLLGDASVSGYEIHCALSSGAALARPLLQLDDGRTDGAISDDGQVLGTYVHGVFDHPMHWLHCWRGPVWRRPRHWILPRCAKPAWSVWPMRCTRIWIPRH.

The GATase cobBQ-type domain occupies 250–437 (QLRVVVPVLP…VHGVFDHPMH (188 aa)). Cysteine 331 acts as the Nucleophile in catalysis. The active site involves histidine 429.

This sequence belongs to the CobB/CobQ family. CobQ subfamily.

It functions in the pathway cofactor biosynthesis; adenosylcobalamin biosynthesis. Its function is as follows. Catalyzes amidations at positions B, D, E, and G on adenosylcobyrinic A,C-diamide. NH(2) groups are provided by glutamine, and one molecule of ATP is hydrogenolyzed for each amidation. In Xanthomonas euvesicatoria pv. vesicatoria (strain 85-10) (Xanthomonas campestris pv. vesicatoria), this protein is Cobyric acid synthase.